Here is a 90-residue protein sequence, read N- to C-terminus: Probable Fe(2+)-trafficking protein (90 aa).

The protein belongs to the Fe(2+)-trafficking protein family.

Could be a mediator in iron transactions between iron acquisition and iron-requiring processes, such as synthesis and/or repair of Fe-S clusters in biosynthetic enzymes. This chain is Probable Fe(2+)-trafficking protein, found in Koribacter versatilis (strain Ellin345).